The chain runs to 286 residues: Large ribosomal subunit protein uL2 (286 aa).

Disordered stretches follow at residues 22–59 (KELTPGYTPERSLLRPKTKTGGRNNQGKITSRHRGGGH) and 215–286 (LGRR…KLHK). A compositionally biased stretch (basic and acidic residues) spans 230 to 240 (DHPHGGGEGRT). Residues 255–286 (KGGRTRQKRKPSNSSIVRRRKSRRYGQLKLHK) show a composition bias toward basic residues.

Belongs to the universal ribosomal protein uL2 family. Part of the 50S ribosomal subunit. Forms a bridge to the 30S subunit in the 70S ribosome.

Functionally, one of the primary rRNA binding proteins. Required for association of the 30S and 50S subunits to form the 70S ribosome, for tRNA binding and peptide bond formation. It has been suggested to have peptidyltransferase activity; this is somewhat controversial. Makes several contacts with the 16S rRNA in the 70S ribosome. The sequence is that of Large ribosomal subunit protein uL2 from Rhodopirellula baltica (strain DSM 10527 / NCIMB 13988 / SH1).